The sequence spans 1939 residues: Myosin-6 (1939 aa).

The 50-residue stretch at 32 to 81 (DIRTECFVPDDKEEFVKAKILSREGGKVIAETENGKTVTVKEDQVLQQNP) folds into the Myosin N-terminal SH3-like domain. Residues 85–780 (DKIEDMAMLT…LLGLLEEMRD (696 aa)) form the Myosin motor domain. Residue Lys129 is modified to N6,N6,N6-trimethyllysine. 178 to 185 (GESGAGKT) serves as a coordination point for ATP. Phosphothreonine is present on Thr379. Ser417 is modified (phosphoserine). 2 actin-binding regions span residues 657–679 (LNKLMTNLRTTHPHFVRCIIPNE) and 759–773 (KFGHTKVFFKAGLLG). The region spanning 783–812 (LSRIITRMQAQARGQLMRIEFKKIVERRDA) is the IQ domain. Positions 842–1939 (LKSAETEKEM…GAKQKMHDEE (1098 aa)) form a coiled coil. A Phosphoserine modification is found at Ser1139. At Tyr1261 the chain carries Phosphotyrosine. Ser1271 carries the phosphoserine modification. 2 positions are modified to phosphothreonine: Thr1277 and Thr1284. Residue Ser1309 is modified to Phosphoserine. At Tyr1310 the chain carries Phosphotyrosine. Thr1311 bears the Phosphothreonine mark. Residue Ser1512 is modified to Phosphoserine. Residue Thr1515 is modified to Phosphothreonine. Basic and acidic residues-rich tracts occupy residues 1826–1837 (GELEAEQKRNAE) and 1925–1939 (KSRDIGAKQKMHDEE). Disordered stretches follow at residues 1826–1849 (GELEAEQKRNAESVKGMRKSERRI) and 1909–1939 (EERADIAESQVNKLRAKSRDIGAKQKMHDEE).

This sequence belongs to the TRAFAC class myosin-kinesin ATPase superfamily. Myosin family. Muscle myosin is a hexameric protein that consists of 2 heavy chain subunits (MHC), 2 alkali light chain subunits (MLC) and 2 regulatory light chain subunits (MLC-2).

Its subcellular location is the cytoplasm. It localises to the myofibril. In terms of biological role, muscle contraction. The sequence is that of Myosin-6 (MYH6) from Homo sapiens (Human).